The chain runs to 89 residues: Small ribosomal subunit protein uS14 (89 aa).

The protein belongs to the universal ribosomal protein uS14 family. In terms of assembly, part of the 30S ribosomal subunit. Contacts proteins S3 and S10.

Its function is as follows. Binds 16S rRNA, required for the assembly of 30S particles and may also be responsible for determining the conformation of the 16S rRNA at the A site. The polypeptide is Small ribosomal subunit protein uS14 (Chlorobaculum tepidum (strain ATCC 49652 / DSM 12025 / NBRC 103806 / TLS) (Chlorobium tepidum)).